The following is a 200-amino-acid chain: dITP/XTP pyrophosphatase (200 aa).

7-12 (SNNRGK) contributes to the substrate binding site. The active-site Proton acceptor is Asp68. Asp68 is a Mg(2+) binding site. Substrate is bound by residues Ala69, 154–157 (FGFD), Lys177, and 182–183 (HR).

The protein belongs to the HAM1 NTPase family. Homodimer. Mg(2+) serves as cofactor.

It carries out the reaction XTP + H2O = XMP + diphosphate + H(+). It catalyses the reaction dITP + H2O = dIMP + diphosphate + H(+). The catalysed reaction is ITP + H2O = IMP + diphosphate + H(+). In terms of biological role, pyrophosphatase that catalyzes the hydrolysis of nucleoside triphosphates to their monophosphate derivatives, with a high preference for the non-canonical purine nucleotides XTP (xanthosine triphosphate), dITP (deoxyinosine triphosphate) and ITP. Seems to function as a house-cleaning enzyme that removes non-canonical purine nucleotides from the nucleotide pool, thus preventing their incorporation into DNA/RNA and avoiding chromosomal lesions. The protein is dITP/XTP pyrophosphatase of Delftia acidovorans (strain DSM 14801 / SPH-1).